Consider the following 357-residue polypeptide: Anthranilate phosphoribosyltransferase (357 aa).

Residues Gly91, Gly94–Asp95, Thr99, Asn101–Thr104, Lys119–Ser127, and Ser131 contribute to the 5-phospho-alpha-D-ribose 1-diphosphate site. An anthranilate-binding site is contributed by Gly91. Ser103 contacts Mg(2+). Asn122 is a binding site for anthranilate. Arg177 contributes to the anthranilate binding site. The Mg(2+) site is built by Asp235 and Glu236.

It belongs to the anthranilate phosphoribosyltransferase family. Homodimer. The cofactor is Mg(2+).

The enzyme catalyses N-(5-phospho-beta-D-ribosyl)anthranilate + diphosphate = 5-phospho-alpha-D-ribose 1-diphosphate + anthranilate. Its pathway is amino-acid biosynthesis; L-tryptophan biosynthesis; L-tryptophan from chorismate: step 2/5. Its function is as follows. Catalyzes the transfer of the phosphoribosyl group of 5-phosphorylribose-1-pyrophosphate (PRPP) to anthranilate to yield N-(5'-phosphoribosyl)-anthranilate (PRA). This chain is Anthranilate phosphoribosyltransferase, found in Shewanella baltica (strain OS155 / ATCC BAA-1091).